The primary structure comprises 181 residues: Transcriptional repressor NrdR (181 aa).

A zinc finger lies at 3–34 (CLFCQHTYTRVIDSRVSEDGATIRRRRECEAC). One can recognise an ATP-cone domain in the interval 49 to 139 (PVIIKKDGGR…VYRSFQDVAD (91 aa)).

Belongs to the NrdR family. It depends on Zn(2+) as a cofactor.

Functionally, negatively regulates transcription of bacterial ribonucleotide reductase nrd genes and operons by binding to NrdR-boxes. The sequence is that of Transcriptional repressor NrdR from Xylella fastidiosa (strain 9a5c).